The chain runs to 508 residues: Maturase K (508 aa).

The protein belongs to the intron maturase 2 family. MatK subfamily.

The protein resides in the plastid. The protein localises to the chloroplast. Its function is as follows. Usually encoded in the trnK tRNA gene intron. Probably assists in splicing its own and other chloroplast group II introns. The chain is Maturase K from Wolffia arrhiza (Rootless water-meal).